The chain runs to 90 residues: uncharacterized protein (90 aa).

The signal sequence occupies residues 1 to 20 (MEKLFVLVFALALLAFSSDA).

Its subcellular location is the secreted. This is an uncharacterized protein from Mus musculus (Mouse).